The sequence spans 360 residues: Peptide chain release factor 1 (360 aa).

Position 235 is an N5-methylglutamine (Gln-235). Residues 285 to 313 (KRQQAEASTRRNLLGSGDRSDRNRTYNFP) are disordered.

It belongs to the prokaryotic/mitochondrial release factor family. Methylated by PrmC. Methylation increases the termination efficiency of RF1.

It localises to the cytoplasm. In terms of biological role, peptide chain release factor 1 directs the termination of translation in response to the peptide chain termination codons UAG and UAA. The sequence is that of Peptide chain release factor 1 from Enterobacter sp. (strain 638).